The following is a 326-amino-acid chain: Beta-ketoacyl-[acyl-carrier-protein] synthase III (326 aa).

Active-site residues include Cys116 and His253. The segment at 254-258 is ACP-binding; sequence QANIR. Asn283 is an active-site residue.

The protein belongs to the thiolase-like superfamily. FabH family. Homodimer.

It is found in the cytoplasm. It carries out the reaction malonyl-[ACP] + acetyl-CoA + H(+) = 3-oxobutanoyl-[ACP] + CO2 + CoA. It participates in lipid metabolism; fatty acid biosynthesis. Its function is as follows. Catalyzes the condensation reaction of fatty acid synthesis by the addition to an acyl acceptor of two carbons from malonyl-ACP. Catalyzes the first condensation reaction which initiates fatty acid synthesis and may therefore play a role in governing the total rate of fatty acid production. Possesses both acetoacetyl-ACP synthase and acetyl transacylase activities. Its substrate specificity determines the biosynthesis of branched-chain and/or straight-chain of fatty acids. This is Beta-ketoacyl-[acyl-carrier-protein] synthase III from Jannaschia sp. (strain CCS1).